A 120-amino-acid polypeptide reads, in one-letter code: UPF0231 protein Spro_4007 (120 aa).

This sequence belongs to the UPF0231 family.

The chain is UPF0231 protein Spro_4007 from Serratia proteamaculans (strain 568).